The sequence spans 188 residues: Adenine phosphoribosyltransferase (188 aa).

This sequence belongs to the purine/pyrimidine phosphoribosyltransferase family. Homodimer.

The protein localises to the cytoplasm. It carries out the reaction AMP + diphosphate = 5-phospho-alpha-D-ribose 1-diphosphate + adenine. The protein operates within purine metabolism; AMP biosynthesis via salvage pathway; AMP from adenine: step 1/1. Its function is as follows. Catalyzes a salvage reaction resulting in the formation of AMP, that is energically less costly than de novo synthesis. This chain is Adenine phosphoribosyltransferase, found in Burkholderia cenocepacia (strain HI2424).